We begin with the raw amino-acid sequence, 466 residues long: Glutamate--tRNA ligase 1 (466 aa).

Residues 9 to 19 (PSPTGLLHIGN) carry the 'HIGH' region motif. The short motif at 238–242 (KLSKR) is the 'KMSKS' region element. Lysine 241 serves as a coordination point for ATP.

Belongs to the class-I aminoacyl-tRNA synthetase family. Glutamate--tRNA ligase type 1 subfamily. Monomer.

Its subcellular location is the cytoplasm. The enzyme catalyses tRNA(Glu) + L-glutamate + ATP = L-glutamyl-tRNA(Glu) + AMP + diphosphate. Catalyzes the attachment of glutamate to tRNA(Glu) in a two-step reaction: glutamate is first activated by ATP to form Glu-AMP and then transferred to the acceptor end of tRNA(Glu). This Gluconacetobacter diazotrophicus (strain ATCC 49037 / DSM 5601 / CCUG 37298 / CIP 103539 / LMG 7603 / PAl5) protein is Glutamate--tRNA ligase 1.